Reading from the N-terminus, the 191-residue chain is Transcriptional regulator MET32 (191 aa).

The segment at 70 to 96 is disordered; the sequence is KKENALPKPPKSSKSKPQDRRNSTGEK. Residues 85 to 96 show a composition bias toward basic and acidic residues; it reads KPQDRRNSTGEK. The C2H2-type 1 zinc finger occupies 98-120; the sequence is FKCAKCSLEFSRSSDLRRHEKTH. The C2H2-type 2; atypical zinc-finger motif lies at 126–150; sequence NICPQCGKGFARKDALKRHYDTLTC.

Interacts with MET4 and MET28.

It localises to the cytoplasm. It is found in the nucleus. In terms of biological role, auxiliary transcriptional regulator of sulfur amino acid metabolism. Involved in the transcriptional activation of MET28. The protein is Transcriptional regulator MET32 (MET32) of Saccharomyces cerevisiae (strain ATCC 204508 / S288c) (Baker's yeast).